The sequence spans 452 residues: 51.5 kDa protein (452 aa).

The Helicase ATP-binding domain occupies 1-126 (MIQSPPGSGK…KDTYDYMIEG (126 aa)). The Helicase C-terminal domain maps to 177-333 (DVVQEYVKHA…NIVQAKQCPD (157 aa)). Residues 331–348 (CPDCSAMWPLSQKMCNLC) fold into a zinc finger.

Its function is as follows. May play a role in either regulating bacteriophages replication or specifying expression of its own genes. The chain is 51.5 kDa protein from Lactococcus (lactic streptococci).